Consider the following 380-residue polypeptide: Apelin receptor (380 aa).

At 1–30 (MEEGGDFDNYYGADNQSECEYTDWKSSGAL) the chain is on the extracellular side. An N-linked (GlcNAc...) asparagine glycan is attached at Asn-15. 2 disulfides stabilise this stretch: Cys-19/Cys-281 and Cys-102/Cys-181. The helical transmembrane segment at 31–54 (IPAIYMLVFLLGTTGNGLVLWTVF) threads the bilayer. Residues 55 to 64 (RSSREKRRSA) lie on the Cytoplasmic side of the membrane. A helical membrane pass occupies residues 65-86 (DIFIASLAVADLTFVVTLPLWA). Residues 87–99 (TYTYRDYDWPFGT) lie on the Extracellular side of the membrane. A helical transmembrane segment spans residues 100-125 (FFCKLSSYLIFVNMYASVFCLTGLSF). Residues 126-146 (DRYLAIVRPVANARLRLRVSG) are Cytoplasmic-facing. A helical transmembrane segment spans residues 147-164 (AVATAVLWVLAALLAMPV). Residues 165–198 (MVLRTTGDLENTTKVQCYMDYSMVATVSSEWAWE) lie on the Extracellular side of the membrane. Asn-175 carries an N-linked (GlcNAc...) asparagine glycan. Residues 199–223 (VGLGVSSTTVGFVVPFTIMLTCYFF) form a helical membrane-spanning segment. The Cytoplasmic portion of the chain corresponds to 224–246 (IAQTIAGHFRKERIEGLRKRRRL). Residues 247–270 (LSIIVVLVVTFALCWMPYHLVKTL) form a helical membrane-spanning segment. Residues 271–289 (YMLGSLLHWPCDFDLFLMN) are Extracellular-facing. The helical transmembrane segment at 290–312 (IFPYCTCISYVNSCLNPFLYAFF) threads the bilayer. Over 313 to 380 (DPRFRQACTS…PYSQETLVVD (68 aa)) the chain is Cytoplasmic. Residues 342 to 351 (KSASYSSGHS) are compositionally biased toward low complexity. The tract at residues 342–380 (KSASYSSGHSQGPGPNMGKGGEQMHEKSIPYSQETLVVD) is disordered. The segment covering 371–380 (PYSQETLVVD) has biased composition (polar residues).

Belongs to the G-protein coupled receptor 1 family. Homodimer; dimerization inhibits APLNR-mediated G protein and beta-arrestin signaling pathways compared to monomeric APLNR. In terms of tissue distribution, expressed in heart, brain, kidney, stomach, spleen, thymus, lung, ovary, small intestine and colon, adipose tissues and pancreas. Expressed in glial cells, astrocytes and neuronal subpopulations. Expressed in embryonic (ESCs) and induced (iPSCs) pluripotent stem cells.

It is found in the cell membrane. Its function is as follows. G protein-coupled receptor for peptide hormones apelin (APLN) and apelin receptor early endogenous ligand (APELA/ELA), that plays a role in the regulation of normal cardiovascular function and fluid homeostasis. When acting as apelin receptor, activates both G(i) protein pathway that inhibits adenylate cyclase activity, and the beta-arrestin pathway that promotes internalization of the receptor. APLNR/APJ also functions as mechanoreceptor that is activated by pathological stimuli in a G-protein-independent fashion to induce beta-arrestin signaling, hence eliciting cardiac hypertrophy. However, the presence of apelin ligand blunts cardiac hypertrophic induction from APLNR/APJ on response to pathological stimuli. Plays a key role in early development such as gastrulation, blood vessels formation and heart morphogenesis by acting as a APELA receptor. May promote angioblast migration toward the embryonic midline, i.e. the position of the future vessel formation, during vasculogenesis. Promotes sinus venosus (SV)-derived endothelial cells migration into the developing heart to promote coronary blood vessel development. Also plays a role in various processes in adults such as regulation of blood vessel formation, blood pressure, heart contractility and heart failure. In terms of biological role, (Microbial infection) Alternative coreceptor with CD4 for HIV-1 infection; may be involved in the development of AIDS dementia. The sequence is that of Apelin receptor from Homo sapiens (Human).